Reading from the N-terminus, the 437-residue chain is MNNNKIKIIGGGLAGCEAAWQAAERGVAVKLHEMKPERYSPAHHLPGLAELVCSNSLRGESLDNAVGLLKEELKRSGSLFIAAALATRVPAGGALAVDRQLFSDYITEKITNHPLIEVVYGEVAQIPEEGIVIVASGPLTSDRLAASIATHTGNYLYFYDAIAPIVTADSIDFGKAFRASRYGKGDGDDYLNCPMDETTYKAFVAALLGGDKVAAKDFEKVVHFEGCMPIEEMAERGPETLRFGPMKPVGLPDPRTGVEPYAVVQLRQENRDGTLFNLVGFQTKLTYSEQKRIFSLIPGLEHADFVRLGSMHRNTFINAPQLLLPTFQLKNTPRILFAGQITGVEGYVESAGSGFMAGINVARLAKGGALTVPPPTTALGALVHHITSVDTKHFQPMNVNYGLFPELGGKVKKKDKRARLAERALTDLTEWQGMVQD.

10-15 (GGGLAG) lines the FAD pocket.

The protein belongs to the MnmG family. TrmFO subfamily. Requires FAD as cofactor.

The protein localises to the cytoplasm. It catalyses the reaction uridine(54) in tRNA + (6R)-5,10-methylene-5,6,7,8-tetrahydrofolate + NADH + H(+) = 5-methyluridine(54) in tRNA + (6S)-5,6,7,8-tetrahydrofolate + NAD(+). The enzyme catalyses uridine(54) in tRNA + (6R)-5,10-methylene-5,6,7,8-tetrahydrofolate + NADPH + H(+) = 5-methyluridine(54) in tRNA + (6S)-5,6,7,8-tetrahydrofolate + NADP(+). Its function is as follows. Catalyzes the folate-dependent formation of 5-methyl-uridine at position 54 (M-5-U54) in all tRNAs. This Geotalea daltonii (strain DSM 22248 / JCM 15807 / FRC-32) (Geobacter daltonii) protein is Methylenetetrahydrofolate--tRNA-(uracil-5-)-methyltransferase TrmFO.